The primary structure comprises 252 residues: Isoprenyl transferase (252 aa).

D32 is a catalytic residue. D32 contributes to the Mg(2+) binding site. Residues 33-36 (GNGR), W37, R45, H49, and 77-79 (STE) contribute to the substrate site. N80 functions as the Proton acceptor in the catalytic mechanism. Substrate is bound by residues W81, R83, R200, and 206–208 (RLS). E219 lines the Mg(2+) pocket.

It belongs to the UPP synthase family. As to quaternary structure, homodimer. Mg(2+) is required as a cofactor.

Its function is as follows. Catalyzes the condensation of isopentenyl diphosphate (IPP) with allylic pyrophosphates generating different type of terpenoids. This chain is Isoprenyl transferase, found in Listeria innocua serovar 6a (strain ATCC BAA-680 / CLIP 11262).